Consider the following 304-residue polypeptide: Nod factor export ATP-binding protein I (304 aa).

One can recognise an ABC transporter domain in the interval 6 to 236 (IDLAGVKKSF…HIGCQVIEIF (231 aa)). Residue 38-45 (GPNGAGKS) coordinates ATP.

Belongs to the ABC transporter superfamily. Lipooligosaccharide exporter (TC 3.A.1.102) family. The complex is composed of two ATP-binding proteins (NodI) and two transmembrane proteins (NodJ).

It localises to the cell inner membrane. Part of the ABC transporter complex NodIJ involved in the export of the nodulation factors (Nod factors), the bacterial signal molecules that induce symbiosis and subsequent nodulation induction. Nod factors are LCO (lipo-chitin oligosaccharide), a modified beta-1,4-linked N-acetylglucosamine oligosaccharide. This subunit is responsible for energy coupling to the transport system. The sequence is that of Nod factor export ATP-binding protein I from Rhizobium sp. (strain N33).